Here is a 94-residue protein sequence, read N- to C-terminus: ESAT-6-like protein EsxI (94 aa).

The protein belongs to the WXG100 family. ESAT-6 subfamily.

It is found in the secreted. The sequence is that of ESAT-6-like protein EsxI from Mycobacterium tuberculosis (strain ATCC 25618 / H37Rv).